The following is a 448-amino-acid chain: Damage-control phosphatase ARMT1 (448 aa).

Mn(2+)-binding residues include Asp257 and Asn258. 257–258 is a substrate binding site; it reads DN. S-adenosyl-L-methionine contacts are provided by Glu262 and Asp295. Mn(2+) is bound at residue Asp295. Substrate contacts are provided by residues 371–375 and Lys408; that span reads DLNYR. The short motif at 405 to 408 is the Subfamily III RTxK motif element; sequence RTLK.

The protein belongs to the damage-control phosphatase family. Sugar phosphate phosphatase III subfamily. Mn(2+) is required as a cofactor. The cofactor is Ni(2+). Automethylated.

It carries out the reaction beta-D-fructose 1-phosphate + H2O = D-fructose + phosphate. It catalyses the reaction beta-D-fructose 6-phosphate = dihydroxyacetone + D-glyceraldehyde 3-phosphate. The catalysed reaction is L-glutamyl-[protein] + S-adenosyl-L-methionine = [protein]-L-glutamate 5-O-methyl ester + S-adenosyl-L-homocysteine. Metal-dependent phosphatase that shows phosphatase activity against several substrates, including fructose-1-phosphate and fructose-6-phosphate. Its preference for fructose-1-phosphate, a strong glycating agent that causes DNA damage rather than a canonical yeast metabolite, suggests a damage-control function in hexose phosphate metabolism. Has also been shown to have O-methyltransferase activity that methylates glutamate residues of target proteins to form gamma-glutamyl methyl ester residues. Possibly methylates PCNA, suggesting it is involved in the DNA damage response. This Danio rerio (Zebrafish) protein is Damage-control phosphatase ARMT1.